The chain runs to 33 residues: Dermaseptin-J7 (33 aa).

Valine amide is present on V33.

As to expression, expressed by the skin glands.

The protein localises to the secreted. Its function is as follows. Has antimicrobial activity. This is Dermaseptin-J7 from Phasmahyla jandaia (Jandaia leaf frog).